The following is a 384-amino-acid chain: Chaperone protein DnaJ (384 aa).

One can recognise a J domain in the interval 5–70 (DFYQVLGVSK…QKRQMYDQYG (66 aa)). Residues 138-216 (GKTVELEIPT…CHGHGRKEET (79 aa)) form a CR-type zinc finger. 8 residues coordinate Zn(2+): C151, C154, C168, C171, C190, C193, C204, and C207. 4 CXXCXGXG motif repeats span residues 151–158 (CRDCNGSG), 168–175 (CGHCHGSG), 190–197 (CPQCRGTG), and 204–211 (CRTCHGHG).

Belongs to the DnaJ family. In terms of assembly, homodimer. Zn(2+) is required as a cofactor.

It localises to the cytoplasm. Functionally, participates actively in the response to hyperosmotic and heat shock by preventing the aggregation of stress-denatured proteins and by disaggregating proteins, also in an autonomous, DnaK-independent fashion. Unfolded proteins bind initially to DnaJ; upon interaction with the DnaJ-bound protein, DnaK hydrolyzes its bound ATP, resulting in the formation of a stable complex. GrpE releases ADP from DnaK; ATP binding to DnaK triggers the release of the substrate protein, thus completing the reaction cycle. Several rounds of ATP-dependent interactions between DnaJ, DnaK and GrpE are required for fully efficient folding. Also involved, together with DnaK and GrpE, in the DNA replication of plasmids through activation of initiation proteins. The polypeptide is Chaperone protein DnaJ (Idiomarina loihiensis (strain ATCC BAA-735 / DSM 15497 / L2-TR)).